The primary structure comprises 143 residues: Spore coat protein P (143 aa).

In terms of domain architecture, sHSP spans Phe34 to Leu143.

The protein belongs to the small heat shock protein (HSP20) family.

The sequence is that of Spore coat protein P (cotP) from Bacillus subtilis (strain 168).